The sequence spans 348 residues: Dihydroorotase (348 aa).

Residues histidine 17 and histidine 19 each coordinate Zn(2+). Substrate-binding positions include 19-21 and asparagine 45; that span reads HLR. Positions 103, 140, and 178 each coordinate Zn(2+). Residue lysine 103 is modified to N6-carboxylysine. Histidine 140 provides a ligand contact to substrate. Leucine 223 is a binding site for substrate. Aspartate 251 is a Zn(2+) binding site. The active site involves aspartate 251. Positions 255 and 267 each coordinate substrate.

It belongs to the metallo-dependent hydrolases superfamily. DHOase family. Class II DHOase subfamily. As to quaternary structure, homodimer. Requires Zn(2+) as cofactor.

The catalysed reaction is (S)-dihydroorotate + H2O = N-carbamoyl-L-aspartate + H(+). It participates in pyrimidine metabolism; UMP biosynthesis via de novo pathway; (S)-dihydroorotate from bicarbonate: step 3/3. Catalyzes the reversible cyclization of carbamoyl aspartate to dihydroorotate. The chain is Dihydroorotase from Salmonella paratyphi B (strain ATCC BAA-1250 / SPB7).